A 242-amino-acid polypeptide reads, in one-letter code: Probable ergothioneine transport ATP-binding protein EgtUA (242 aa).

The ABC transporter domain occupies 2 to 236 (IEYKNVALRY…PATDFVADLF (235 aa)). 34-41 (GPSGSGKT) is a binding site for ATP.

Belongs to the ABC transporter superfamily. The complex is probably composed of at least an ATP-binding protein (EgtUA) and a transmembrane protein (EgtUBC).

It localises to the cell inner membrane. It catalyses the reaction ergothioneine(out) + ATP + H2O = ergothioneine(in) + ADP + phosphate + H(+). In terms of biological role, part of an ABC transporter complex EgtU required for the uptake of ergothioneine (EGT), a natural low-molecular weight (LMW) thiol antioxidant. Probably responsible for energy coupling to the transport system. The sequence is that of Probable ergothioneine transport ATP-binding protein EgtUA from Streptococcus pneumoniae serotype 2 (strain D39 / NCTC 7466).